A 223-amino-acid chain; its full sequence is Deoxyribose-phosphate aldolase (223 aa).

Residue aspartate 91 is the Proton donor/acceptor of the active site. Catalysis depends on lysine 153, which acts as the Schiff-base intermediate with acetaldehyde. Catalysis depends on lysine 183, which acts as the Proton donor/acceptor.

It belongs to the DeoC/FbaB aldolase family. DeoC type 1 subfamily.

The protein localises to the cytoplasm. It carries out the reaction 2-deoxy-D-ribose 5-phosphate = D-glyceraldehyde 3-phosphate + acetaldehyde. Its pathway is carbohydrate degradation; 2-deoxy-D-ribose 1-phosphate degradation; D-glyceraldehyde 3-phosphate and acetaldehyde from 2-deoxy-alpha-D-ribose 1-phosphate: step 2/2. Its function is as follows. Catalyzes a reversible aldol reaction between acetaldehyde and D-glyceraldehyde 3-phosphate to generate 2-deoxy-D-ribose 5-phosphate. The protein is Deoxyribose-phosphate aldolase of Mycoplasmopsis synoviae (strain 53) (Mycoplasma synoviae).